Reading from the N-terminus, the 339-residue chain is Phenylalanine--tRNA ligase alpha subunit (339 aa).

Glu247 contributes to the Mg(2+) binding site.

Belongs to the class-II aminoacyl-tRNA synthetase family. Phe-tRNA synthetase alpha subunit type 1 subfamily. Tetramer of two alpha and two beta subunits. Requires Mg(2+) as cofactor.

It is found in the cytoplasm. It carries out the reaction tRNA(Phe) + L-phenylalanine + ATP = L-phenylalanyl-tRNA(Phe) + AMP + diphosphate + H(+). This Deinococcus deserti (strain DSM 17065 / CIP 109153 / LMG 22923 / VCD115) protein is Phenylalanine--tRNA ligase alpha subunit.